We begin with the raw amino-acid sequence, 76 residues long: Small proline-rich protein 2I (76 aa).

Repeat copies occupy residues 21–29 (KKCPEPCPP), 30–38 (PQCPEPCPP), and 39–47 (PKCPEPCPE). The tract at residues 21-47 (KKCPEPCPPPQCPEPCPPPKCPEPCPE) is 3 X 9 AA approximate tandem repeats. Over residues 40-53 (KCPEPCPESCPPPS) the composition is skewed to pro residues. The tract at residues 40-76 (KCPEPCPESCPPPSYQQKCPPVQPPPPCQQKCPPKSK) is disordered.

This sequence belongs to the cornifin (SPRR) family. In terms of tissue distribution, not expressed in uterus.

The protein localises to the cytoplasm. In terms of biological role, cross-linked envelope protein of keratinocytes. It is a keratinocyte protein that first appears in the cell cytosol, but ultimately becomes cross-linked to membrane proteins by transglutaminase. All that results in the formation of an insoluble envelope beneath the plasma membrane. This Mus musculus (Mouse) protein is Small proline-rich protein 2I (Sprr2i).